A 156-amino-acid chain; its full sequence is Transcription elongation factor GreA (156 aa).

Positions 12–72 (YKKLEDELST…KEIEHELKYA (61 aa)) form a coiled coil.

It belongs to the GreA/GreB family.

Necessary for efficient RNA polymerase transcription elongation past template-encoded arresting sites. The arresting sites in DNA have the property of trapping a certain fraction of elongating RNA polymerases that pass through, resulting in locked ternary complexes. Cleavage of the nascent transcript by cleavage factors such as GreA or GreB allows the resumption of elongation from the new 3'terminus. GreA releases sequences of 2 to 3 nucleotides. The chain is Transcription elongation factor GreA from Dehalococcoides mccartyi (strain ATCC BAA-2266 / KCTC 15142 / 195) (Dehalococcoides ethenogenes (strain 195)).